The sequence spans 622 residues: MKRTTRYSRKYVPSIDGLRALAVIAVIAYHLNFSWAKGGFIGVDIFFVLSGYLITNILLTQWEKNQSLQLKQFWIRRFRRLIPAVYVMIVVVVIYSVFFHPEILKNLRGDAIASFFYVSNWWFIFHNVSYFDSFGLPSPLKNLWSLAIEEQFYLIWPAFLLVFLKWVKNPKLLLKIVIGLGLLSAVWMTILYVPGTDPSRVYYGTDTRAFDLLSGCALAFVWPFNRLSPVVPRKSKAVLNIAGTISILCFILFTAFVSEYQPFLYRGGLLFVAILGVIMIATISHPASYLSKIFSFKPLRWIGTRSYGIYLWHYPIITLTTPVLEITQPNIWRAILQVAATFIIAELSFRFIETPIRKNGFINYFKGFKDKNYFIWKNKPVGKWLSIAGVVAVLAIFTLGMSNVLSVNTNAEKQQTSVKTTTSTPDEKKDDKKEDKATKDKEADSNKASEQKETQKPDNKNKSAATPKTIITQTVAIGDSVMLDIEPYLKEAVPNITIDGLVGRQLRDAITTATGYKKFNSENSSVILELGTNGPFTEDQLNDLLDQFDKATIYLVNTRVPRGWQSDVNKSIANAASRPNVTVVDWYSRSSGQSQYFAPDGVHLTKAGAQAYVAMLTSVMNK.

Helical transmembrane passes span 11 to 31 (YVPSIDGLRALAVIAVIAYHL), 39 to 59 (GFIGVDIFFVLSGYLITNILL), 81 to 101 (LIPAVYVMIVVVVIYSVFFHP), 143 to 163 (LWSLAIEEQFYLIWPAFLLVF), 173 to 193 (LLKIVIGLGLLSAVWMTILYV), 212 to 232 (LLSGCALAFVWPFNRLSPVVP), 237 to 257 (AVLNIAGTISILCFILFTAFV), 267 to 287 (GGLLFVAILGVIMIATISHPA), 307 to 327 (YGIYLWHYPIITLTTPVLEIT), 334 to 354 (AILQVAATFIIAELSFRFIET), and 387 to 407 (IAGVVAVLAIFTLGMSNVLSV). Positions 412–467 (EKQQTSVKTTTSTPDEKKDDKKEDKATKDKEADSNKASEQKETQKPDNKNKSAATP) are disordered. Residues 413–424 (KQQTSVKTTTST) show a composition bias toward low complexity. Positions 425–461 (PDEKKDDKKEDKATKDKEADSNKASEQKETQKPDNKN) are enriched in basic and acidic residues. Residues serine 480, aspartate 600, and histidine 603 contribute to the active site.

It belongs to the acyltransferase 3 family.

The protein localises to the cell membrane. It is found in the secreted. Its subcellular location is the cell wall. Its function is as follows. Responsible for O-acetylation at the C6-hydroxyl group of N-acetylmuramyl residues, forming the corresponding N,6-O-diacetylmuramic acid of the peptidoglycan. O-acetylation of the peptidoglycan is the major determinant for lysozyme resistance. Critical for virulence and escape from innate immune response of the host. Involved at both early and later stages of listeriosis in the mouse model of infection. Required for successful host colonization and for intracellular survival of bacteria in macrophages of the infected host. Controls the production of inflammatory mediators in the liver of the infected host. Confers resistance to host antimicrobial molecules and to cell wall-targeting molecules such as beta-lactam antibiotics and bacteriocins. The polypeptide is Peptidoglycan O-acetyltransferase OatA (Listeria monocytogenes serovar 1/2a (strain ATCC BAA-679 / EGD-e)).